A 36-amino-acid chain; its full sequence is Photosystem I reaction center subunit VIII (36 aa).

The helical transmembrane segment at 6-28 threads the bilayer; the sequence is LPSIFVPLVGLMFPAIAMASLSL.

Belongs to the PsaI family.

The protein resides in the plastid. The protein localises to the chloroplast thylakoid membrane. Its function is as follows. May help in the organization of the PsaL subunit. This is Photosystem I reaction center subunit VIII from Calycanthus floridus var. glaucus (Eastern sweetshrub).